Here is a 407-residue protein sequence, read N- to C-terminus: Imidazolonepropionase (407 aa).

Fe(3+) is bound by residues H68 and H70. 2 residues coordinate Zn(2+): H68 and H70. Residues R77, Y140, and H173 each contribute to the 4-imidazolone-5-propanoate site. Y140 provides a ligand contact to N-formimidoyl-L-glutamate. Position 238 (H238) interacts with Fe(3+). Position 238 (H238) interacts with Zn(2+). Residue Q241 coordinates 4-imidazolone-5-propanoate. D313 contributes to the Fe(3+) binding site. D313 is a binding site for Zn(2+). N-formimidoyl-L-glutamate-binding residues include N315 and G317. Residue T318 participates in 4-imidazolone-5-propanoate binding.

It belongs to the metallo-dependent hydrolases superfamily. HutI family. Zn(2+) serves as cofactor. Requires Fe(3+) as cofactor.

It is found in the cytoplasm. It carries out the reaction 4-imidazolone-5-propanoate + H2O = N-formimidoyl-L-glutamate. Its pathway is amino-acid degradation; L-histidine degradation into L-glutamate; N-formimidoyl-L-glutamate from L-histidine: step 3/3. Its function is as follows. Catalyzes the hydrolytic cleavage of the carbon-nitrogen bond in imidazolone-5-propanoate to yield N-formimidoyl-L-glutamate. It is the third step in the universal histidine degradation pathway. This Burkholderia cenocepacia (strain ATCC BAA-245 / DSM 16553 / LMG 16656 / NCTC 13227 / J2315 / CF5610) (Burkholderia cepacia (strain J2315)) protein is Imidazolonepropionase.